The following is a 227-amino-acid chain: Ribonuclease 3 (227 aa).

Positions 7–132 (LTAFMDRLGY…VIAAVYLDGG (126 aa)) constitute an RNase III domain. Position 45 (E45) interacts with Mg(2+). D49 is a catalytic residue. Residues D118 and E121 each contribute to the Mg(2+) site. The active site involves E121. The DRBM domain maps to 157–226 (DAKTALQEWA…AKDLLAQLAG (70 aa)).

It belongs to the ribonuclease III family. As to quaternary structure, homodimer. Mg(2+) is required as a cofactor.

It is found in the cytoplasm. It catalyses the reaction Endonucleolytic cleavage to 5'-phosphomonoester.. Its function is as follows. Digests double-stranded RNA. Involved in the processing of primary rRNA transcript to yield the immediate precursors to the large and small rRNAs (23S and 16S). Processes some mRNAs, and tRNAs when they are encoded in the rRNA operon. Processes pre-crRNA and tracrRNA of type II CRISPR loci if present in the organism. The chain is Ribonuclease 3 from Jannaschia sp. (strain CCS1).